The following is a 241-amino-acid chain: Orotidine 5'-phosphate decarboxylase (241 aa).

Substrate contacts are provided by residues aspartate 15, lysine 37, 64 to 73 (DLKYHDIPNT), threonine 126, arginine 187, glutamine 196, glycine 216, and arginine 217. The Proton donor role is filled by lysine 66.

Belongs to the OMP decarboxylase family. Type 1 subfamily. Homodimer.

The catalysed reaction is orotidine 5'-phosphate + H(+) = UMP + CO2. It participates in pyrimidine metabolism; UMP biosynthesis via de novo pathway; UMP from orotate: step 2/2. In terms of biological role, catalyzes the decarboxylation of orotidine 5'-monophosphate (OMP) to uridine 5'-monophosphate (UMP). The chain is Orotidine 5'-phosphate decarboxylase from Trichlorobacter lovleyi (strain ATCC BAA-1151 / DSM 17278 / SZ) (Geobacter lovleyi).